We begin with the raw amino-acid sequence, 338 residues long: D-erythrose-4-phosphate dehydrogenase (338 aa).

12 to 13 is a binding site for NAD(+); sequence RI. Residues 154–156, arginine 200, 213–214, and arginine 236 each bind substrate; these read SCT and TK. The active-site Nucleophile is the cysteine 155. NAD(+) is bound at residue asparagine 318.

It belongs to the glyceraldehyde-3-phosphate dehydrogenase family. Epd subfamily. As to quaternary structure, homotetramer.

The protein localises to the cytoplasm. The enzyme catalyses D-erythrose 4-phosphate + NAD(+) + H2O = 4-phospho-D-erythronate + NADH + 2 H(+). Its pathway is cofactor biosynthesis; pyridoxine 5'-phosphate biosynthesis; pyridoxine 5'-phosphate from D-erythrose 4-phosphate: step 1/5. In terms of biological role, catalyzes the NAD-dependent conversion of D-erythrose 4-phosphate to 4-phosphoerythronate. The sequence is that of D-erythrose-4-phosphate dehydrogenase from Pectobacterium carotovorum subsp. carotovorum (strain PC1).